Consider the following 632-residue polypeptide: Probable potassium transport system protein Kup (632 aa).

12 consecutive transmembrane segments (helical) span residues 17–37, 60–80, 106–126, 146–166, 175–195, 210–230, 254–274, 292–312, 344–364, 370–390, 401–421, and 426–446; these read LFYL…TSPL, LISL…VLFL, TAIL…DAMI, LSEY…VVQS, FFGP…ISHI, AVSF…AVFL, WFLL…ALVL, ALLP…QAVI, IFVP…VLSF, LATA…IMAF, LPVA…FLGA, and IHDG…IMWT.

This sequence belongs to the HAK/KUP transporter (TC 2.A.72) family.

It is found in the cell inner membrane. The catalysed reaction is K(+)(in) + H(+)(in) = K(+)(out) + H(+)(out). Functionally, transport of potassium into the cell. Likely operates as a K(+):H(+) symporter. This chain is Probable potassium transport system protein Kup, found in Rhizobium rhizogenes (Agrobacterium rhizogenes).